Consider the following 70-residue polypeptide: DNA-directed RNA polymerase subunit omega (70 aa).

It belongs to the RNA polymerase subunit omega family. In terms of assembly, the RNAP catalytic core consists of 2 alpha, 1 beta, 1 beta' and 1 omega subunit. When a sigma factor is associated with the core the holoenzyme is formed, which can initiate transcription.

The catalysed reaction is RNA(n) + a ribonucleoside 5'-triphosphate = RNA(n+1) + diphosphate. Functionally, promotes RNA polymerase assembly. Latches the N- and C-terminal regions of the beta' subunit thereby facilitating its interaction with the beta and alpha subunits. The sequence is that of DNA-directed RNA polymerase subunit omega from Staphylococcus epidermidis (strain ATCC 12228 / FDA PCI 1200).